Here is a 432-residue protein sequence, read N- to C-terminus: MAGCAMNLQFSSVVKVRNEISSFGICNRDFVFRDLAKAMKVPVLRIRGGSGRQRSRLFVVNMSQSPIEPQSGGFAATEQIKGEGDNSILGKDNVRNLGTDQLENLDIDGNVGDGFNGSDGNGGGGGGGNGGEGDGEGEDYEEKEFGPILKFEEVMKETEARGATLPSDMLEAAKNYGIRKVLLLRYLDLQSSAGLLGFAIRSWAMLRNRMLADPSFLFKIGAEIVIDSCCATVAEVQKRGKDFWAEFELYVADLLVGTVVNIALVGMLAPYVRFGQPSASPGFLGRMVFAYNALPSSVFEAERPGCRFSAQQRLATYFYKGIMYGAVGFGCGIVGQGIANLIMTAKRNINKSEENIPVPPLIKSAALWGVFLSVSSNTRYQIINGLERVVEASPFAKKFPPAAMAFTVGVRLANNIYGGMQFVDWARLSGCQ.

The N-terminal 47 residues, Met1–Arg47, are a transit peptide targeting the chloroplast. Residues Gly109–Tyr140 form a disordered region. Residues Val111–Glu132 are compositionally biased toward gly residues. The next 2 helical transmembrane spans lie at Leu249–Ala269 and Ile322–Ile342.

This sequence belongs to the RETICULATA family. Highly expressed in the vasculature of developing leaf primordia, margins of fully expanded leaves, hydathodes of rosette of cauline leaves, basal region of the lamina, stipules, root tips, stamens and in the abscission zone of the funiculus.

It is found in the plastid. The protein resides in the chloroplast membrane. May play a role in leaf development. Required for leaf mesophyll cell division in the early stages of leaf organogenesis. Acts in a developmental pathway that involves PPT1/CUE1 but does not include ASE2/DOV1. The chain is Protein RETICULATA, chloroplastic from Arabidopsis thaliana (Mouse-ear cress).